The sequence spans 88 residues: Small ribosomal subunit protein uS15 (88 aa).

The protein belongs to the universal ribosomal protein uS15 family. As to quaternary structure, part of the 30S ribosomal subunit. Forms a bridge to the 50S subunit in the 70S ribosome, contacting the 23S rRNA.

In terms of biological role, one of the primary rRNA binding proteins, it binds directly to 16S rRNA where it helps nucleate assembly of the platform of the 30S subunit by binding and bridging several RNA helices of the 16S rRNA. Functionally, forms an intersubunit bridge (bridge B4) with the 23S rRNA of the 50S subunit in the ribosome. This is Small ribosomal subunit protein uS15 from Psychrobacter cryohalolentis (strain ATCC BAA-1226 / DSM 17306 / VKM B-2378 / K5).